The chain runs to 503 residues: Glutamate/gamma-aminobutyrate antiporter (503 aa).

33-43 (LHLVFFLLLGG) serves as a coordination point for L-glutamate. 7 consecutive transmembrane segments (helical) span residues 35–55 (LVFFLLLGGLLWFLPVALCAA), 153–173 (FVVGIVIPSIILFGLAAAYFI), 194–214 (VSTLVVFVSFILAYMGVEASA), 232–252 (ILLVILAISLDAIGGFSVAAV), 366–386 (LTVVIYLVGYLLFFIGYFVLI), 407–427 (IIAGIGFLLSIFALFISFVPP), and 440–460 (MILLISFVVTAILPFIVYELH).

It belongs to the amino acid-polyamine-organocation (APC) superfamily. Glutamate:GABA antiporter (GGA) (TC 2.A.3.7) family.

Its subcellular location is the cell membrane. The enzyme catalyses 4-aminobutanoate(in) + L-glutamate(out) = 4-aminobutanoate(out) + L-glutamate(in). Involved in glutaminase-dependent acid resistance. Exchanges extracellular glutamate (Glu) for intracellular gamma-aminobutyric acid (GABA) under acidic conditions. In Lactococcus lactis subsp. lactis (strain IL1403) (Streptococcus lactis), this protein is Glutamate/gamma-aminobutyrate antiporter (gadC).